The chain runs to 279 residues: MAGRGGMVEWEVGRRRDSEDVIVLSPGPPARRRPPPVKAVEPESGGFAYEPPEKLFYKTRVCETFVTSGRCMFEDGCTFAHGDEELRPSLTACAGGWRKPSPSLSAAAPPVAVAPTPPPAQVVHELLARGSGSGGGGHRAITKVCFEFRDKGICYFGETCAFPHVSAAEIRQGSRLSSMSSSSWEMPARRSVAVTVPRTFVSVPPVAPPPPPPHYRVNNSSSYNAASMAAAAPAASDANLVAQQPPPEQGGRKMTRLEMLSLKKMTGIYGDWLEGYEHP.

The segment at 20–45 (DVIVLSPGPPARRRPPPVKAVEPESG) is disordered. 2 C3H1-type zinc fingers span residues 56-84 (FYKT…HGDE) and 139-167 (RAIT…HVSA).

The protein is Zinc finger CCCH domain-containing protein 1 of Oryza sativa subsp. japonica (Rice).